We begin with the raw amino-acid sequence, 407 residues long: Aminoacylase-1 (407 aa).

An N-acetylalanine modification is found at A2. H80 is a Zn(2+) binding site. D82 is an active-site residue. Residue D113 coordinates Zn(2+). E147 (proton acceptor) is an active-site residue. Residues E148, E175, and H372 each coordinate Zn(2+).

It belongs to the peptidase M20A family. As to quaternary structure, homodimer. Interacts with SPHK1. Zn(2+) serves as cofactor.

Its subcellular location is the cytoplasm. It catalyses the reaction an N-acyl-L-amino acid + H2O = an L-alpha-amino acid + a carboxylate. The enzyme catalyses N-acetyl-L-methionine + H2O = L-methionine + acetate. The catalysed reaction is N-acetyl-L-glutamine + H2O = L-glutamine + acetate. Its function is as follows. Catalyzes the hydrolysis of N-acetylated amino acids to acetate and free amino acids. This is Aminoacylase-1 (ACY1) from Sus scrofa (Pig).